We begin with the raw amino-acid sequence, 159 residues long: Phosphopantetheine adenylyltransferase (159 aa).

Residue S8 coordinates substrate. ATP is bound by residues 8 to 9 (SF) and H16. Substrate-binding residues include K40, L73, and K87. ATP-binding positions include 88–90 (GLR), E98, and 122–128 (YGYVSST).

Belongs to the bacterial CoaD family. As to quaternary structure, homohexamer. The cofactor is Mg(2+).

Its subcellular location is the cytoplasm. It carries out the reaction (R)-4'-phosphopantetheine + ATP + H(+) = 3'-dephospho-CoA + diphosphate. The protein operates within cofactor biosynthesis; coenzyme A biosynthesis; CoA from (R)-pantothenate: step 4/5. In terms of biological role, reversibly transfers an adenylyl group from ATP to 4'-phosphopantetheine, yielding dephospho-CoA (dPCoA) and pyrophosphate. In Corynebacterium efficiens (strain DSM 44549 / YS-314 / AJ 12310 / JCM 11189 / NBRC 100395), this protein is Phosphopantetheine adenylyltransferase.